The chain runs to 60 residues: Large ribosomal subunit protein bL32 (60 aa).

Belongs to the bacterial ribosomal protein bL32 family.

This chain is Large ribosomal subunit protein bL32, found in Ruminiclostridium cellulolyticum (strain ATCC 35319 / DSM 5812 / JCM 6584 / H10) (Clostridium cellulolyticum).